A 366-amino-acid polypeptide reads, in one-letter code: Transaldolase (366 aa).

Lysine 140 (schiff-base intermediate with substrate) is an active-site residue.

The protein belongs to the transaldolase family. Type 2 subfamily.

The protein localises to the cytoplasm. The enzyme catalyses D-sedoheptulose 7-phosphate + D-glyceraldehyde 3-phosphate = D-erythrose 4-phosphate + beta-D-fructose 6-phosphate. It functions in the pathway carbohydrate degradation; pentose phosphate pathway; D-glyceraldehyde 3-phosphate and beta-D-fructose 6-phosphate from D-ribose 5-phosphate and D-xylulose 5-phosphate (non-oxidative stage): step 2/3. Its function is as follows. Transaldolase is important for the balance of metabolites in the pentose-phosphate pathway. The sequence is that of Transaldolase from Saccharopolyspora erythraea (strain ATCC 11635 / DSM 40517 / JCM 4748 / NBRC 13426 / NCIMB 8594 / NRRL 2338).